The primary structure comprises 427 residues: 3-phosphoshikimate 1-carboxyvinyltransferase (427 aa).

The 3-phosphoshikimate site is built by Lys21, Ser22, and Arg26. Lys21 contributes to the phosphoenolpyruvate binding site. Phosphoenolpyruvate is bound by residues Gly93 and Arg121. 3-phosphoshikimate is bound by residues Ser166, Gln168, Asp314, and Lys341. Gln168 contributes to the phosphoenolpyruvate binding site. The active-site Proton acceptor is Asp314. Residues Arg345 and Arg387 each contribute to the phosphoenolpyruvate site.

The protein belongs to the EPSP synthase family. Monomer.

It is found in the cytoplasm. It carries out the reaction 3-phosphoshikimate + phosphoenolpyruvate = 5-O-(1-carboxyvinyl)-3-phosphoshikimate + phosphate. The protein operates within metabolic intermediate biosynthesis; chorismate biosynthesis; chorismate from D-erythrose 4-phosphate and phosphoenolpyruvate: step 6/7. Functionally, catalyzes the transfer of the enolpyruvyl moiety of phosphoenolpyruvate (PEP) to the 5-hydroxyl of shikimate-3-phosphate (S3P) to produce enolpyruvyl shikimate-3-phosphate and inorganic phosphate. This is 3-phosphoshikimate 1-carboxyvinyltransferase from Alkaliphilus oremlandii (strain OhILAs) (Clostridium oremlandii (strain OhILAs)).